Consider the following 351-residue polypeptide: Small ribosomal subunit biogenesis GTPase RsgA (351 aa).

The 171-residue stretch at 107-277 (ENLLQRPDNF…LIDSPGIREF (171 aa)) folds into the CP-type G domain. Residues 163–166 (NKTD) and 219–227 (GQSGVGKSS) each bind GTP. 4 residues coordinate Zn(2+): cysteine 301, cysteine 306, histidine 308, and cysteine 314.

It belongs to the TRAFAC class YlqF/YawG GTPase family. RsgA subfamily. As to quaternary structure, monomer. Associates with 30S ribosomal subunit, binds 16S rRNA. Zn(2+) is required as a cofactor.

Its subcellular location is the cytoplasm. In terms of biological role, one of several proteins that assist in the late maturation steps of the functional core of the 30S ribosomal subunit. Helps release RbfA from mature subunits. May play a role in the assembly of ribosomal proteins into the subunit. Circularly permuted GTPase that catalyzes slow GTP hydrolysis, GTPase activity is stimulated by the 30S ribosomal subunit. The chain is Small ribosomal subunit biogenesis GTPase RsgA from Marinobacter nauticus (strain ATCC 700491 / DSM 11845 / VT8) (Marinobacter aquaeolei).